Here is a 320-residue protein sequence, read N- to C-terminus: Histidine decarboxylase proenzyme (320 aa).

A propeptide spanning residues 2–11 is cleaved from the precursor; that stretch reads NKNLEANRNR. A Pyruvic acid (Ser) modification is found at serine 98. The active-site Proton donor is glutamate 215.

As to quaternary structure, the proenzyme is a hexamer of identical pi chains; each pi chain monomer is cleaved to form a small (or beta) chain and a large (or alpha) chain by non-hydrolytic self-catalysis. It depends on pyruvate as a cofactor.

The catalysed reaction is L-histidine + H(+) = histamine + CO2. This chain is Histidine decarboxylase proenzyme (hdc), found in Clostridium perfringens (strain ATCC 13124 / DSM 756 / JCM 1290 / NCIMB 6125 / NCTC 8237 / Type A).